A 300-amino-acid chain; its full sequence is Protoheme IX farnesyltransferase (300 aa).

Transmembrane regions (helical) follow at residues 26–46 (VVQL…PGLP), 54–74 (IAWA…FNCI), 102–122 (LLFS…LVNP), 123–143 (LTMW…TLIL), 150–170 (NIVI…AAMT), 177–197 (ALIL…ALAL), 224–244 (VLLY…YGMS), 246–266 (WPYL…GFAL), and 279–299 (FRFS…DHYL).

The protein belongs to the UbiA prenyltransferase family. Protoheme IX farnesyltransferase subfamily.

It is found in the cell inner membrane. The enzyme catalyses heme b + (2E,6E)-farnesyl diphosphate + H2O = Fe(II)-heme o + diphosphate. Its pathway is porphyrin-containing compound metabolism; heme O biosynthesis; heme O from protoheme: step 1/1. In terms of biological role, converts heme B (protoheme IX) to heme O by substitution of the vinyl group on carbon 2 of heme B porphyrin ring with a hydroxyethyl farnesyl side group. In Verminephrobacter eiseniae (strain EF01-2), this protein is Protoheme IX farnesyltransferase.